Here is a 477-residue protein sequence, read N- to C-terminus: UDP-N-acetylmuramate--L-alanine ligase (477 aa).

122–128 (GTHGKTT) is an ATP binding site.

It belongs to the MurCDEF family.

Its subcellular location is the cytoplasm. The catalysed reaction is UDP-N-acetyl-alpha-D-muramate + L-alanine + ATP = UDP-N-acetyl-alpha-D-muramoyl-L-alanine + ADP + phosphate + H(+). It participates in cell wall biogenesis; peptidoglycan biosynthesis. Its function is as follows. Cell wall formation. This chain is UDP-N-acetylmuramate--L-alanine ligase, found in Xylella fastidiosa (strain 9a5c).